A 314-amino-acid polypeptide reads, in one-letter code: MAIKRRKISVIGSGFTGATTALMVAQKELGDVVLLDIPNMEGPTKGKALDMLESTPVQGVDSTITGTSSYEDTKDSDVVVITAGIARKPGMSRDDLVATNAKIMKSVTKEVVKYSPNSYIIVLTNPADAMTYTVYKESGFPKNRVIGQSGVLDTARFRTFVAQELNVSVEDVTGFVLGGHGDDMVPLIRYSAAGGVPLTKLIAPERIEEIVERTRKGGGEIVGLLGNGSAYYAPAASLTQMVEAILKDKKRIIPTIAYLEGEYGQHDLYLGVPTILGGDGIEKVIELDLTEEEKAQLDKSVQSVRNVMAALPAE.

Residues 12–17 (GSGFTG) and Asp36 contribute to the NAD(+) site. Arg87 and Arg93 together coordinate substrate. NAD(+) contacts are provided by residues Asn100 and 123–125 (LTN). Residue Asn125 coordinates substrate. Ser149 carries the post-translational modification Phosphoserine. A substrate-binding site is contributed by Arg156. His180 acts as the Proton acceptor in catalysis.

Belongs to the LDH/MDH superfamily. MDH type 3 family.

The catalysed reaction is (S)-malate + NAD(+) = oxaloacetate + NADH + H(+). Catalyzes the reversible oxidation of malate to oxaloacetate. This chain is Malate dehydrogenase, found in Shouchella clausii (strain KSM-K16) (Alkalihalobacillus clausii).